The following is a 377-amino-acid chain: RIB43A-like with coiled-coils protein 2 (377 aa).

Residues 188 to 238 (ELKFDEAARDLQRLEITTRKAVCAAVKEFNKKQVVELAERKRQVKQQEQED) adopt a coiled-coil conformation. The segment at 355 to 377 (QLDAAPSSQPTEDYFSQFNTRSR) is disordered. Over residues 360–377 (PSSQPTEDYFSQFNTRSR) the composition is skewed to polar residues.

This sequence belongs to the RIB43A family. As to quaternary structure, microtubule inner protein component of sperm flagellar doublet microtubules.

The protein localises to the cytoplasm. Its subcellular location is the cytoskeleton. The protein resides in the cilium axoneme. It is found in the flagellum axoneme. Microtubule inner protein (MIP) part of the dynein-decorated doublet microtubules (DMTs) in cilia axoneme, which is required for motile cilia beating. This Rattus norvegicus (Rat) protein is RIB43A-like with coiled-coils protein 2.